Reading from the N-terminus, the 678-residue chain is ABC transporter F family member 2 (678 aa).

ABC transporter domains follow at residues 84–342 (VRLE…EAQY) and 411–626 (VTVK…AREL). Residues 116 to 123 (GVNGAGKT) and 443 to 450 (GPNGCGKS) each bind ATP. Residues 630–678 (AELEEKAPKVKAKSKMSKAEREARKKQKMKAFQASKKKSKSSKNAKRWN) form a disordered region. Over residues 653-678 (RKKQKMKAFQASKKKSKSSKNAKRWN) the composition is skewed to basic residues.

The protein belongs to the ABC transporter superfamily. ABCF family. EF3 (TC 3.A.1.121) subfamily.

The sequence is that of ABC transporter F family member 2 (ABCF2) from Arabidopsis thaliana (Mouse-ear cress).